A 398-amino-acid polypeptide reads, in one-letter code: UDP-N-acetylglucosamine--N-acetylmuramyl-(pentapeptide) pyrophosphoryl-undecaprenol N-acetylglucosamine transferase (398 aa).

UDP-N-acetyl-alpha-D-glucosamine is bound by residues 15 to 17 (TGG), Asn-125, Arg-168, Ser-196, and Gln-297.

It belongs to the glycosyltransferase 28 family. MurG subfamily.

The protein resides in the cell inner membrane. It carries out the reaction di-trans,octa-cis-undecaprenyl diphospho-N-acetyl-alpha-D-muramoyl-L-alanyl-D-glutamyl-meso-2,6-diaminopimeloyl-D-alanyl-D-alanine + UDP-N-acetyl-alpha-D-glucosamine = di-trans,octa-cis-undecaprenyl diphospho-[N-acetyl-alpha-D-glucosaminyl-(1-&gt;4)]-N-acetyl-alpha-D-muramoyl-L-alanyl-D-glutamyl-meso-2,6-diaminopimeloyl-D-alanyl-D-alanine + UDP + H(+). The protein operates within cell wall biogenesis; peptidoglycan biosynthesis. Functionally, cell wall formation. Catalyzes the transfer of a GlcNAc subunit on undecaprenyl-pyrophosphoryl-MurNAc-pentapeptide (lipid intermediate I) to form undecaprenyl-pyrophosphoryl-MurNAc-(pentapeptide)GlcNAc (lipid intermediate II). This is UDP-N-acetylglucosamine--N-acetylmuramyl-(pentapeptide) pyrophosphoryl-undecaprenol N-acetylglucosamine transferase from Erythrobacter litoralis (strain HTCC2594).